Consider the following 374-residue polypeptide: S-adenosylmethionine synthase 2 (374 aa).

Residue Glu11 participates in Mg(2+) binding. Residue His17 participates in ATP binding. K(+) is bound at residue Glu45. Positions 58 and 101 each coordinate L-methionine. ATP-binding positions include 169–171, 237–240, Asp248, 254–255, Ala271, Lys275, and Lys279; these read DGK, SGRF, and RK. An L-methionine-binding site is contributed by Asp248. Lys279 contributes to the L-methionine binding site.

Belongs to the AdoMet synthase family. In terms of assembly, homotetramer. The cofactor is Mn(2+). Mg(2+) is required as a cofactor. Co(2+) serves as cofactor. It depends on K(+) as a cofactor. In terms of tissue distribution, expressed in vegetative and reproductive tissues.

Its subcellular location is the cytoplasm. The enzyme catalyses L-methionine + ATP + H2O = S-adenosyl-L-methionine + phosphate + diphosphate. Its pathway is amino-acid biosynthesis; S-adenosyl-L-methionine biosynthesis; S-adenosyl-L-methionine from L-methionine: step 1/1. Functionally, catalyzes the formation of S-adenosylmethionine from methionine and ATP. The reaction comprises two steps that are both catalyzed by the same enzyme: formation of S-adenosylmethionine (AdoMet) and triphosphate, and subsequent hydrolysis of the triphosphate. In Pisum sativum (Garden pea), this protein is S-adenosylmethionine synthase 2 (SAMS2).